The chain runs to 482 residues: Arginine/ornithine antiporter (482 aa).

The Cytoplasmic portion of the chain corresponds to 1–10 (MSQESSQKLR). The chain crosses the membrane as a helical span at residues 11 to 31 (LGALTALVVGSMIGGGIFSLP). Residues 32-40 (QNMAASADV) lie on the Periplasmic side of the membrane. Residues 41-61 (GAVLIGWAITAVGMLTLAFVF) form a helical membrane-spanning segment. Residues 62–100 (QTLANRKPELDGGVYAYAKAGFGDYMGFSSAWGYWISAW) are Cytoplasmic-facing. Residues 101–121 (LGNVGYFVLLFSTLGYFFPIF) traverse the membrane as a helical segment. Residues 122-124 (GKG) are Periplasmic-facing. The helical transmembrane segment at 125-145 (DTVAAIVCASVLLWALHFLVL) threads the bilayer. Topologically, residues 146-156 (RGIKEAAFINT) are cytoplasmic. The helical transmembrane segment at 157-177 (VTTVAKVVPLFLFILICLFAF) threads the bilayer. Topologically, residues 178 to 202 (KLDIFTADIWGKSNPDLGSVMNQVR) are periplasmic. The helical transmembrane segment at 203 to 223 (NMMLVTVWVFIGIEGASIFSS) threads the bilayer. Over 224–235 (RAEKRSDVGKAT) the chain is Cytoplasmic. A helical transmembrane segment spans residues 236 to 256 (VIGFITVLLLLVLVNVLSMGV). Over 257 to 283 (MTQPELAKLQNPSMALVLEHVVGHWGA) the chain is Periplasmic. A helical transmembrane segment spans residues 284 to 304 (VLISVGLLISLLGALLSWVLL). Residues 305-333 (CAEIMFAAAKDHTMPEFLRRENANQVPAN) lie on the Cytoplasmic side of the membrane. A helical transmembrane segment spans residues 334–354 (ALWLTNICVQVFLVVVFFTSG). The Periplasmic segment spans residues 355–365 (DPDGMDPYTKM). Residues 366 to 386 (LLLATSMILIPYFWSAAYGLL) traverse the membrane as a helical segment. Residues 387-403 (LTLKGETYENDARERSK) are Cytoplasmic-facing. Residues 404 to 424 (DLVIAGIAVAYAVWLLYAGGL) form a helical membrane-spanning segment. Position 425 (Lys425) is a topological domain, periplasmic. Residues 426–446 (YLLLSALLYAPGAILFAKAKH) traverse the membrane as a helical segment. The Cytoplasmic portion of the chain corresponds to 447-458 (EVGQPIFTGIEK). A helical transmembrane segment spans residues 459 to 479 (LIFAAVVIGALVAAYGLYDGF). At 480–482 (LTL) the chain is on the periplasmic side.

Belongs to the amino acid-polyamine-organocation (APC) superfamily. Basic amino acid/polyamine antiporter (APA) (TC 2.A.3.2) family.

The protein localises to the cell inner membrane. It catalyses the reaction L-ornithine(in) + L-arginine(out) = L-ornithine(out) + L-arginine(in). Functionally, catalyzes electroneutral exchange between arginine and ornithine to allow high-efficiency energy conversion in the arginine deiminase pathway. Also mediates the proton motive force-driven uptake of arginine and ornithine, but the exchange is several orders of magnitude faster than the proton motive force-driven transport. This chain is Arginine/ornithine antiporter, found in Pseudomonas aeruginosa (strain ATCC 15692 / DSM 22644 / CIP 104116 / JCM 14847 / LMG 12228 / 1C / PRS 101 / PAO1).